Consider the following 308-residue polypeptide: 4-hydroxy-3-methylbut-2-enyl diphosphate reductase 2 (308 aa).

Cys12 is a binding site for [4Fe-4S] cluster. The (2E)-4-hydroxy-3-methylbut-2-enyl diphosphate site is built by His41 and His74. Residues His41 and His74 each contribute to the dimethylallyl diphosphate site. Isopentenyl diphosphate-binding residues include His41 and His74. Position 96 (Cys96) interacts with [4Fe-4S] cluster. His124 serves as a coordination point for (2E)-4-hydroxy-3-methylbut-2-enyl diphosphate. Position 124 (His124) interacts with dimethylallyl diphosphate. Residue His124 coordinates isopentenyl diphosphate. Glu126 (proton donor) is an active-site residue. Position 164 (Thr164) interacts with (2E)-4-hydroxy-3-methylbut-2-enyl diphosphate. Cys194 lines the [4Fe-4S] cluster pocket. (2E)-4-hydroxy-3-methylbut-2-enyl diphosphate is bound by residues Ser222, Ser223, Asn224, and Ser266. Ser222, Ser223, Asn224, and Ser266 together coordinate dimethylallyl diphosphate. The isopentenyl diphosphate site is built by Ser222, Ser223, Asn224, and Ser266.

This sequence belongs to the IspH family. Requires [4Fe-4S] cluster as cofactor.

The enzyme catalyses isopentenyl diphosphate + 2 oxidized [2Fe-2S]-[ferredoxin] + H2O = (2E)-4-hydroxy-3-methylbut-2-enyl diphosphate + 2 reduced [2Fe-2S]-[ferredoxin] + 2 H(+). The catalysed reaction is dimethylallyl diphosphate + 2 oxidized [2Fe-2S]-[ferredoxin] + H2O = (2E)-4-hydroxy-3-methylbut-2-enyl diphosphate + 2 reduced [2Fe-2S]-[ferredoxin] + 2 H(+). The protein operates within isoprenoid biosynthesis; dimethylallyl diphosphate biosynthesis; dimethylallyl diphosphate from (2E)-4-hydroxy-3-methylbutenyl diphosphate: step 1/1. It functions in the pathway isoprenoid biosynthesis; isopentenyl diphosphate biosynthesis via DXP pathway; isopentenyl diphosphate from 1-deoxy-D-xylulose 5-phosphate: step 6/6. Functionally, catalyzes the conversion of 1-hydroxy-2-methyl-2-(E)-butenyl 4-diphosphate (HMBPP) into a mixture of isopentenyl diphosphate (IPP) and dimethylallyl diphosphate (DMAPP). Acts in the terminal step of the DOXP/MEP pathway for isoprenoid precursor biosynthesis. The sequence is that of 4-hydroxy-3-methylbut-2-enyl diphosphate reductase 2 from Bradyrhizobium diazoefficiens (strain JCM 10833 / BCRC 13528 / IAM 13628 / NBRC 14792 / USDA 110).